The chain runs to 544 residues: MSNLDSTHHFDVVIVGSGGAGLSLALSLPSHYKIAILAKSSLTEASTFYAQGGVAAVLDKTDSIQQHIDDTMIAGAHLCELDAVKQTVEGGRPSVNFLLKHGVEFTLDEDDQLHLTREGGHSQRRIIHAADATGKAISTTLVQRAKEASNLTIFENFIAIDIITLHKLGHIQQDNRAVGLYVLDEQNEKVHTFLAPFIALACGGAMKAYLYTSNPDIATGDGIAMAYRAGCRVANMEFNQFHPTCLYHPQARSFLITEAMRGEGAYLRLPDGERFMLRFDERAELAPRDIVARAIDYEIKRLGIRHVWLDITHKSAEFIQQHFPTLYTRLLELGIDITKDMIPVVPAAHYTCGGVVVNAQSQTDIEGLYAIGETSYTGLHGANRMASNSLLECFVYGLSAAEDIQQKFEQDFNLPNIPEWDDSQVTDADEDVVILQNWDELRSTMWNYVGIVRTTKRLQRALHRIEMLKREITEYYQDYRVSKNLIELRNLVLVSEMIVRCAMQRKESRGLHYTLDYPELEQQLKKTVLTPPNFEVKQIPVNTL.

FAD contacts are provided by residues serine 17 to alanine 20, lysine 39, serine 46 to glycine 53, and aspartate 221. The Proton donor/acceptor role is filled by arginine 288. Residues glutamate 373 and serine 389–leucine 390 contribute to the FAD site.

The protein belongs to the FAD-dependent oxidoreductase 2 family. NadB subfamily. FAD serves as cofactor.

Its subcellular location is the cytoplasm. It catalyses the reaction L-aspartate + O2 = iminosuccinate + H2O2. Its pathway is cofactor biosynthesis; NAD(+) biosynthesis; iminoaspartate from L-aspartate (oxidase route): step 1/1. Its function is as follows. Catalyzes the oxidation of L-aspartate to iminoaspartate, the first step in the de novo biosynthesis of NAD(+). The sequence is that of L-aspartate oxidase from Acinetobacter baylyi (strain ATCC 33305 / BD413 / ADP1).